The sequence spans 345 residues: N-acetyl-gamma-glutamyl-phosphate reductase (345 aa).

The active site involves cysteine 149.

It belongs to the NAGSA dehydrogenase family. Type 1 subfamily.

The protein localises to the cytoplasm. The catalysed reaction is N-acetyl-L-glutamate 5-semialdehyde + phosphate + NADP(+) = N-acetyl-L-glutamyl 5-phosphate + NADPH + H(+). The protein operates within amino-acid biosynthesis; L-arginine biosynthesis; N(2)-acetyl-L-ornithine from L-glutamate: step 3/4. Functionally, catalyzes the NADPH-dependent reduction of N-acetyl-5-glutamyl phosphate to yield N-acetyl-L-glutamate 5-semialdehyde. The chain is N-acetyl-gamma-glutamyl-phosphate reductase from Bacillus cereus (strain 03BB102).